The following is a 343-amino-acid chain: Polyprenyl transferase spyF (343 aa).

Helical transmembrane passes span 38–58, 62–82, 92–112, 138–158, 170–190, 241–261, 273–293, and 311–331; these read WLAVFSGGVSLPILIGNSHPL, VSVWATLLAGANQIATHPASI, LLCLICGYIFCGAGMVWNDWI, GFIWMMVHVAAMIPVTISTIL, LYIYPQYFLGFSLAWPGAIGW, AYVAAGSRIHMFLVILAGLVL, SGWLWASWMCVWALSFVHQLL, and FALGVWTIVACAAELGLSSGM.

It belongs to the UbiA prenyltransferase family. It depends on Mg(2+) as a cofactor.

The protein resides in the membrane. The catalysed reaction is triacetate lactone + (2E,6E,10E)-geranylgeranyl diphosphate = (2E,6E,10E)-geranylgeranyl-triacetate lactone + diphosphate. Its pathway is secondary metabolite biosynthesis; terpenoid biosynthesis. Functionally, polyprenyl transferase; part of the gene cluster that mediates the biosynthesis of meroterpenoids called sartorypyrones. Within the pathway, spyF catalyzes the prenylation of triacetic acid lactone (TAL) to produce geranylgeranyl-triacetate lactone. The biosynthesis of sartorypyrones begins with the production of triacetic acid lactone (TAL) by the NR-PKS spyA using one molecule of acetyl-CoA and two molecules of malonyl-CoA. The prenyltransferase spyF then conjugates geranylgeranyl pyrophosphate (GGPP) to TAL to form geranylgeranyl-triacetate lactone, for which the pathway-specific geranylgeranyl pyrophosphate synthase (GGPS) spyE is required to provide GGPP. Subsequently, geranylgeranyl-triacetate lactone is epoxidized at the terminal olein by the FAD-dependent monooxygenase spyC, followed by cyclization of the terpenoid component catalyzed by the terpene cyclase spyD to produce both the bicyclic sartorypyrone F and the monocyclic sartorypyrone D. Finally, the last step of the biosynthesis involves the acetylation of the meroterpenoids sartorypyrones D and F by the acetyltransferase SpyB to produce sartorypyrones A and G, respectively. This chain is Polyprenyl transferase spyF, found in Aspergillus fumigatus (strain ATCC MYA-4609 / CBS 101355 / FGSC A1100 / Af293) (Neosartorya fumigata).